The chain runs to 303 residues: Putative AraC-like transcription regulator (303 aa).

Residues 202–300 form the HTH araC/xylS-type domain; that stretch reads ASALTFLHRD…GMNPGDYRKH (99 aa). 2 consecutive DNA-binding regions (H-T-H motif) follow at residues 219-240 and 267-290; these read AELA…KATV and LAAI…KRVL.

The sequence is that of Putative AraC-like transcription regulator from Streptomyces antibioticus.